We begin with the raw amino-acid sequence, 221 residues long: MDSGKDTNGYERVWETNCGAMNSGLIMWVISGSGSFSDHYERDPTGGITFTVTNPGTSKRVITVGAFASRPLDTQSFYNAGRIAYFSSRGPTRNGRIKPNIVAGGYFICSTNSEFSSHSDPYICAEGHYYVPFAGTSMATAVVMGLVALYLQDHSFAIPEEVKEWFSSNAVEDDNFLYPNVVYCSEKAVYVLETRFKGSGKTSEQKLRRVTFSYRLAEMGL.

The Peptidase S8 domain occupies 1–189; it reads MDSGKDTNGY…NVVYCSEKAV (189 aa).

Belongs to the peptidase S8 family.

This is an uncharacterized protein from Aquifex aeolicus (strain VF5).